The chain runs to 657 residues: MPSSTLLELAPNTHSKCKFETRNRSSSSSSGCSSSSTELYDLAAAHAALISRQQQILNQGIPIIPEHQLAAAAVAHHHHQLHPSVQHQLVAGHHHHHLPQVAHHPAILPRSDVIQQPSHFALHQHLQNLVQQQQQQQALHHHQQLVGDMALVSHTHPAAVGSTTCYEKNPQKQQQVPQIPTQPQVAHVSSNAILAAAQPFYQPPVQDSQPDRPIGYGAFGVVWSVTDPRSGKRVALKKMPNVFQNLASCKRVFREIKMLSSFRHDNVLSLLDILQPANPSFFQEFTSWHLTPSIHHQRLISHIKPICLFFVLPLVSLLCAHMYVCMWWHGTALLEGRKETITYVLTELMQSDLHKIIVSPQTLTIDHVKVFVYQILRGLKYLHTANILHRDIKPGNLLVNSNCILKICDFGLARTWDSRDRLNMTHEVVTQYYRAPELLMGARRYTGAVDIWSVGCIFAELLQRKILFQAAGPIEQLQMIIDLLGTPSQEAMKYACEGAKNHVLRAGPRAPNLQSLYRLSQQTTDDAVDLLVKLLKFNPDERISVEEALSHPYLEEGRLRFHSCMCSCCYTKANVPSRIFSQELDPKHESPFDPKWEKDMSRLSMFELREKMYQFVMDRPALYGVALCINPQSAAYKNFASSSVAQASELPPSPQAW.

The Protein kinase domain maps to 208-554 (SQPDRPIGYG…VEEALSHPYL (347 aa)). Residues 214–222 (IGYGAFGVV) and Lys237 contribute to the ATP site. The active-site Proton acceptor is Asp391.

This sequence belongs to the protein kinase superfamily. Ser/Thr protein kinase family. As to quaternary structure, component of the beta-catenin-lit-1 complex (also called the lit-1/wrm-1 complex or the wrm-1/lit-1 kinase complex) at least composed of lit-1 and wrm-1. Interacts with wrm-1 (via N-terminus); the interaction is direct and activates lit-1 kinase activity which leads to the phosphorylation of pop-1. This promotes pop-1 interaction with par-5 and translocation of pop-1 from the nucleus to the cytoplasm. Interacts with pop-1 (when phosphorylated on 'Ser-125'); the interaction is dependent on the beta-catenin-lit-1 complex. Mg(2+) serves as cofactor.

The protein localises to the cytoplasm. The protein resides in the cell cortex. It localises to the nucleus. The enzyme catalyses L-seryl-[protein] + ATP = O-phospho-L-seryl-[protein] + ADP + H(+). It catalyses the reaction L-threonyl-[protein] + ATP = O-phospho-L-threonyl-[protein] + ADP + H(+). Has a role in the Wnt signaling pathway controlling the asymmetry of cell divisions during embryogenesis. Operates in the AB and EMS cell lineages influencing cell specification. Required for body wall muscle development, endoderm development, pop-1 asymmetry and T-cell division asymmetry. Component of the beta-catenin-lit-1 complex which promotes the phosphorylation, down-regulation and subcellular relocation of pop-1. Regulates plp-1 nuclear localization in embryos. Plays a role in male tail tip morphogenesis. The polypeptide is Serine/threonine kinase NLK (Caenorhabditis briggsae).